The chain runs to 248 residues: 1-(5-phosphoribosyl)-5-[(5-phosphoribosylamino)methylideneamino] imidazole-4-carboxamide isomerase (248 aa).

The active-site Proton acceptor is aspartate 8. Aspartate 127 serves as the catalytic Proton donor.

This sequence belongs to the HisA/HisF family.

The protein localises to the cytoplasm. The catalysed reaction is 1-(5-phospho-beta-D-ribosyl)-5-[(5-phospho-beta-D-ribosylamino)methylideneamino]imidazole-4-carboxamide = 5-[(5-phospho-1-deoxy-D-ribulos-1-ylimino)methylamino]-1-(5-phospho-beta-D-ribosyl)imidazole-4-carboxamide. It participates in amino-acid biosynthesis; L-histidine biosynthesis; L-histidine from 5-phospho-alpha-D-ribose 1-diphosphate: step 4/9. The sequence is that of 1-(5-phosphoribosyl)-5-[(5-phosphoribosylamino)methylideneamino] imidazole-4-carboxamide isomerase from Thermotoga neapolitana (strain ATCC 49049 / DSM 4359 / NBRC 107923 / NS-E).